Consider the following 418-residue polypeptide: Creatine kinase U-type, mitochondrial (418 aa).

The transit peptide at 1–39 (MAGPFSRLLSARPGLRLLALAGAGSLTAGILLRPESVGA) directs the protein to the mitochondrion. Positions 40–64 (AAAERRRLYPPSAEYPDLRKHNNCM) are cardiolipin-binding. The region spanning 46–132 (RLYPPSAEYP…FDPVIQERHN (87 aa)) is the Phosphagen kinase N-terminal domain. Ser-152 bears the Phosphoserine mark. Positions 159-401 (YVLSSRVRTG…NYLIDCERRL (243 aa)) constitute a Phosphagen kinase C-terminal domain. 162–166 (SSRVR) lines the ATP pocket. Residue Ser-197 is modified to Phosphoserine. Thr-214 bears the Phosphothreonine mark. Position 225 (His-225) interacts with ATP. Ser-233 carries the post-translational modification Phosphoserine. ATP contacts are provided by residues Arg-270, Arg-326, and 354-359 (RGTGGV). Phosphothreonine is present on Thr-356. Ser-366 carries the post-translational modification Phosphoserine. Asp-369 is a binding site for ATP.

This sequence belongs to the ATP:guanido phosphotransferase family. Exists as an octamer composed of four MTCK homodimers.

It is found in the mitochondrion inner membrane. It carries out the reaction creatine + ATP = N-phosphocreatine + ADP + H(+). In terms of biological role, reversibly catalyzes the transfer of phosphate between ATP and various phosphogens (e.g. creatine phosphate). Creatine kinase isoenzymes play a central role in energy transduction in tissues with large, fluctuating energy demands, such as skeletal muscle, heart, brain and spermatozoa. The polypeptide is Creatine kinase U-type, mitochondrial (Ckmt1) (Mus musculus (Mouse)).